The sequence spans 202 residues: MTKPQTLIIATNNANKAREFSAMLAPYDITIKTLADFPNIPEIKENGITFEENATKKATVVVEATGLPAIADDSGLMVKALHGDPGVFSARYAGDHDDAANNAKLLANLGGVPEAERTATFHTTLVALKPSGEKLVVNGELAGRILIAPRGDNGFGYDPLFWSSKFQKSLAELTPAQKNQISHRGAALRQLMTKFDEWWAKA.

11-16 is a substrate binding site; it reads TNNANK. Asp-73 acts as the Proton acceptor in catalysis. Position 73 (Asp-73) interacts with Mg(2+). Substrate is bound by residues Ser-74, 155–158, Lys-178, and 183–184; these read FGYD and HR.

The protein belongs to the HAM1 NTPase family. As to quaternary structure, homodimer. It depends on Mg(2+) as a cofactor.

It carries out the reaction XTP + H2O = XMP + diphosphate + H(+). The catalysed reaction is dITP + H2O = dIMP + diphosphate + H(+). It catalyses the reaction ITP + H2O = IMP + diphosphate + H(+). Its function is as follows. Pyrophosphatase that catalyzes the hydrolysis of nucleoside triphosphates to their monophosphate derivatives, with a high preference for the non-canonical purine nucleotides XTP (xanthosine triphosphate), dITP (deoxyinosine triphosphate) and ITP. Seems to function as a house-cleaning enzyme that removes non-canonical purine nucleotides from the nucleotide pool, thus preventing their incorporation into DNA/RNA and avoiding chromosomal lesions. The polypeptide is dITP/XTP pyrophosphatase (Lactiplantibacillus plantarum (strain ATCC BAA-793 / NCIMB 8826 / WCFS1) (Lactobacillus plantarum)).